We begin with the raw amino-acid sequence, 170 residues long: Mediator of RNA polymerase II transcription subunit 10 (170 aa).

Belongs to the Mediator complex subunit 10 family. In terms of assembly, component of the Mediator complex.

It localises to the nucleus. In terms of biological role, component of the Mediator complex, a coactivator involved in the regulated transcription of nearly all RNA polymerase II-dependent genes. Mediator functions as a bridge to convey information from gene-specific regulatory proteins to the basal RNA polymerase II transcription machinery. Mediator is recruited to promoters by direct interactions with regulatory proteins and serves as a scaffold for the assembly of a functional preinitiation complex with RNA polymerase II and the general transcription factors. This chain is Mediator of RNA polymerase II transcription subunit 10 (NUT2), found in Candida albicans (strain SC5314 / ATCC MYA-2876) (Yeast).